The following is a 462-amino-acid chain: Indoleacetamide hydrolase (462 aa).

Active-site charge relay system residues include Lys74 and Ser149. Residue Ser173 is the Acyl-ester intermediate of the active site.

The protein belongs to the amidase family.

It functions in the pathway plant hormone metabolism; auxin biosynthesis. Functionally, hydrolyzes indole-3-acetamide (IAM) into indole-3-acetic acid (IAA). The sequence is that of Indoleacetamide hydrolase (iaaH) from Allorhizobium ampelinum (strain ATCC BAA-846 / DSM 112012 / S4) (Agrobacterium vitis (strain S4)).